The chain runs to 140 residues: MAKLKLDIVTAERSVFSEEVDVVVAPGIEGEMAILPHHAPLMTALQAGELKAKIGTEEYSLVVSGGFLEVRPDRVVVLADSAERAEEIDIARAIEAKKRAEASMADKYVPGMLAAETEASLRRAMVRLKVAEKRRKHPQV.

This sequence belongs to the ATPase epsilon chain family. In terms of assembly, F-type ATPases have 2 components, CF(1) - the catalytic core - and CF(0) - the membrane proton channel. CF(1) has five subunits: alpha(3), beta(3), gamma(1), delta(1), epsilon(1). CF(0) has three main subunits: a, b and c.

It localises to the cell membrane. Functionally, produces ATP from ADP in the presence of a proton gradient across the membrane. This is ATP synthase epsilon chain from Dehalococcoides mccartyi (strain ATCC BAA-2100 / JCM 16839 / KCTC 5957 / BAV1).